We begin with the raw amino-acid sequence, 315 residues long: Olfactory receptor 3A3 (315 aa).

Residues 1 to 28 (MESEAGTNRTAVAEFMLLGLVQTEEMQS) are Extracellular-facing. N8 is a glycosylation site (N-linked (GlcNAc...) asparagine). Residues 29–52 (VIFVLLLFAYLVTTGGNLSILAAI) form a helical membrane-spanning segment. Over 53–60 (LVEPKLHT) the chain is Cytoplasmic. A helical membrane pass occupies residues 61–82 (PMYFFLGNLSVLDVGCITVTVP). Over 83-103 (AMLGRLLSHKSTISYDACLSQ) the chain is Extracellular. C100 and C192 form a disulfide bridge. A helical transmembrane segment spans residues 104–123 (LFFFHLLAGMDCFLLTAMAY). Residues 124-143 (DRFLAICRPLTYSTHMNQRV) are Cytoplasmic-facing. A helical transmembrane segment spans residues 144 to 161 (QRMLVAVSWTCAFTNALT). Topologically, residues 162-199 (HTIALTTLNFCGPSVINHFYCDLPQLFQLSCSSTQLNE) are extracellular. A helical transmembrane segment spans residues 200–222 (LLLFVAAAVMAVAPLVFISVSYA). Topologically, residues 223 to 239 (HVVAAVLQIHSAEGRKK) are cytoplasmic. A helical transmembrane segment spans residues 240-262 (AFSTCGSHLTVVGIFYGTGVFSY). Over 263–275 (MRLGSVESSDKDK) the chain is Extracellular. Residues 276 to 295 (GVGVFMTVINPMLNPLIYSL) form a helical membrane-spanning segment. Over 296–315 (RNTDVQGALCQLLVVKRSLT) the chain is Cytoplasmic.

Belongs to the G-protein coupled receptor 1 family.

It localises to the cell membrane. Functionally, odorant receptor. The polypeptide is Olfactory receptor 3A3 (OR3A3) (Pan troglodytes (Chimpanzee)).